The sequence spans 105 residues: Large ribosomal subunit protein P2 (105 aa).

This sequence belongs to the eukaryotic ribosomal protein P1/P2 family. P1 and P2 exist as dimers at the large ribosomal subunit. In terms of processing, phosphorylated.

Plays an important role in the elongation step of protein synthesis. The sequence is that of Large ribosomal subunit protein P2 (LIP2) from Leishmania braziliensis.